We begin with the raw amino-acid sequence, 390 residues long: Succinate--CoA ligase [ADP-forming] subunit beta (390 aa).

The ATP-grasp domain occupies 9-248; it reads KEILRRHKAN…ITEEDPLEVQ (240 aa). Residues Lys50, 57–59, Glu103, Ile106, and Glu111 contribute to the ATP site; that span reads GRG. 2 residues coordinate Mg(2+): Asn203 and Asp217. Residues Asn268 and 325–327 each bind substrate; that span reads GIV.

Belongs to the succinate/malate CoA ligase beta subunit family. Heterotetramer of two alpha and two beta subunits. Mg(2+) is required as a cofactor.

The enzyme catalyses succinate + ATP + CoA = succinyl-CoA + ADP + phosphate. The catalysed reaction is GTP + succinate + CoA = succinyl-CoA + GDP + phosphate. Its pathway is carbohydrate metabolism; tricarboxylic acid cycle; succinate from succinyl-CoA (ligase route): step 1/1. Functionally, succinyl-CoA synthetase functions in the citric acid cycle (TCA), coupling the hydrolysis of succinyl-CoA to the synthesis of either ATP or GTP and thus represents the only step of substrate-level phosphorylation in the TCA. The beta subunit provides nucleotide specificity of the enzyme and binds the substrate succinate, while the binding sites for coenzyme A and phosphate are found in the alpha subunit. The chain is Succinate--CoA ligase [ADP-forming] subunit beta from Leptospira interrogans serogroup Icterohaemorrhagiae serovar copenhageni (strain Fiocruz L1-130).